A 316-amino-acid chain; its full sequence is Pantothenate kinase (316 aa).

ATP is bound at residue 95–102 (GSVAVGKS).

This sequence belongs to the prokaryotic pantothenate kinase family.

The protein localises to the cytoplasm. The catalysed reaction is (R)-pantothenate + ATP = (R)-4'-phosphopantothenate + ADP + H(+). It functions in the pathway cofactor biosynthesis; coenzyme A biosynthesis; CoA from (R)-pantothenate: step 1/5. The sequence is that of Pantothenate kinase from Salmonella gallinarum (strain 287/91 / NCTC 13346).